Here is a 319-residue protein sequence, read N- to C-terminus: ATP-dependent 6-phosphofructokinase (319 aa).

Gly11 contributes to the ATP binding site. ADP is bound at residue 21–25; that stretch reads RAVVR. ATP is bound by residues 72-73 and 102-105; these read RC and GEGS. Glu103 contacts Mg(2+). A substrate-binding site is contributed by 126–128; sequence TID. Asp128 acts as the Proton acceptor in catalysis. Lys155 provides a ligand contact to ADP. Residues Arg163 and 170 to 172 each bind substrate; that span reads MGR. Residues 186–188, Arg212, and 214–216 contribute to the ADP site; these read GAE and KIN. Substrate contacts are provided by residues Glu223, Arg244, and 250-253; that span reads HVQR.

Belongs to the phosphofructokinase type A (PFKA) family. ATP-dependent PFK group I subfamily. Prokaryotic clade 'B1' sub-subfamily. As to quaternary structure, homotetramer. Mg(2+) serves as cofactor.

Its subcellular location is the cytoplasm. The enzyme catalyses beta-D-fructose 6-phosphate + ATP = beta-D-fructose 1,6-bisphosphate + ADP + H(+). The protein operates within carbohydrate degradation; glycolysis; D-glyceraldehyde 3-phosphate and glycerone phosphate from D-glucose: step 3/4. With respect to regulation, allosterically activated by ADP and other diphosphonucleosides, and allosterically inhibited by phosphoenolpyruvate. In terms of biological role, catalyzes the phosphorylation of D-fructose 6-phosphate to fructose 1,6-bisphosphate by ATP, the first committing step of glycolysis. In Thermotoga petrophila (strain ATCC BAA-488 / DSM 13995 / JCM 10881 / RKU-1), this protein is ATP-dependent 6-phosphofructokinase.